Consider the following 206-residue polypeptide: Glycerol-3-phosphate acyltransferase (206 aa).

The next 6 helical transmembrane spans lie at 6–26 (IFLA…PSGF), 57–77 (KAAL…ILIA), 86–106 (FHVI…WLNW), 118–138 (VFLG…MAVL), 143–163 (IVSL…FLSL), and 165–185 (EASF…MVLW).

This sequence belongs to the PlsY family. Probably interacts with PlsX.

The protein resides in the cell inner membrane. It catalyses the reaction an acyl phosphate + sn-glycerol 3-phosphate = a 1-acyl-sn-glycero-3-phosphate + phosphate. The protein operates within lipid metabolism; phospholipid metabolism. Catalyzes the transfer of an acyl group from acyl-phosphate (acyl-PO(4)) to glycerol-3-phosphate (G3P) to form lysophosphatidic acid (LPA). This enzyme utilizes acyl-phosphate as fatty acyl donor, but not acyl-CoA or acyl-ACP. The polypeptide is Glycerol-3-phosphate acyltransferase (Prochlorococcus marinus (strain MIT 9211)).